Here is a 425-residue protein sequence, read N- to C-terminus: MSVLGKTLQEKVNLLAQYPQTGLSLKQLVYFGKNPTPGTLFRAGLFLRDELPIRLARRIQDLQNLSPMLRSMKRISSVKAAYGRSMEEIIELKGVELPKCLPKHARYHNAPKWRSSLMDSEILHNPSLANTHLDSSKGRYFETDFSDQDNGVDCNWPESLLKFNSNFAYLLNTIRTRHDNVAVEIALDIQEYRRKTNQIDNSIQIFLDRFYMSRIGIRMLLGQYIALVSEPPRENYVGVISTRANIYQIIEGAAENAKYICRLAYGLFEAPEIQIICDPSLEMMYVESHLNHAVFEILKNSLRATVEFHGVDSDFFPPIKVIVAKGQEDITIKISDEGGGISRRNIPLVWSYMFTTASPTLTDDPHDIVSANSTTPMAGFGFGLPLARLYTRYFGGDLELISMEGYGTDVYIHLNRLCESAEPLQ.

The residue at position 178 (histidine 178) is a Phosphohistidine; by autocatalysis. Residues 180–418 (NVAVEIALDI…DVYIHLNRLC (239 aa)) enclose the Histidine kinase domain. ATP contacts are provided by residues 296–303 (EILKNSLR), aspartate 336, 355–356 (TT), and 379–384 (GFGFGL).

The protein belongs to the PDK/BCKDK protein kinase family.

It localises to the mitochondrion matrix. The catalysed reaction is L-seryl-[pyruvate dehydrogenase E1 alpha subunit] + ATP = O-phospho-L-seryl-[pyruvate dehydrogenase E1 alpha subunit] + ADP + H(+). Its function is as follows. Inhibits the mitochondrial pyruvate dehydrogenase complex by phosphorylation of the E1 alpha subunit, thus contributing to the regulation of glucose metabolism. The chain is [Pyruvate dehydrogenase (acetyl-transferring)] kinase, mitochondrial (pkp1) from Schizosaccharomyces pombe (strain 972 / ATCC 24843) (Fission yeast).